Reading from the N-terminus, the 139-residue chain is Protein spalt-accessory (139 aa).

Positions Met-1–Ala-16 are cleaved as a signal peptide. Gly residues predominate over residues Gly-60–Gly-75. The disordered stretch occupies residues Gly-60 to His-139. Over residues Asn-109–His-121 the composition is skewed to basic and acidic residues. Over residues Arg-122 to His-139 the composition is skewed to basic residues.

It is found in the secreted. Functionally, likely to be involved in the establishment of the head. This Drosophila simulans (Fruit fly) protein is Protein spalt-accessory (sala).